A 275-amino-acid chain; its full sequence is MQAVQREIAEQLNVQPPFADDQALEAEVARRISFIQDCLTSSGLKTLVLGISGGVDSLTAGLLAQRAMRELRERTGDEAYKFIAVRLPYDVQFDEHDAQASVDFIAPDERHTVNIGPAVKSLASEVAAFEGKHAVSVDFVLGNTKARMRMVAQYTIAGATHGLVIGTDHAAEAVMGFFTKFGDGACDLAPLSGLVKNQVRAIARSFGAPESLVEKVPTADLEDLSPGKPDEASHGVTYAEIDAFLHGEPVRQEAFDIIVNTYKKTHHKRVMPFAP.

Residue 50–57 (GISGGVDS) participates in ATP binding. Aspartate 56 is a binding site for Mg(2+). Deamido-NAD(+) is bound at residue arginine 147. Threonine 167 is an ATP binding site. Mg(2+) is bound at residue glutamate 172. Deamido-NAD(+) contacts are provided by lysine 180 and aspartate 187. ATP contacts are provided by lysine 196 and threonine 218. Residue 267–268 (HK) participates in deamido-NAD(+) binding.

Belongs to the NAD synthetase family. In terms of assembly, homodimer.

The catalysed reaction is deamido-NAD(+) + NH4(+) + ATP = AMP + diphosphate + NAD(+) + H(+). Its pathway is cofactor biosynthesis; NAD(+) biosynthesis; NAD(+) from deamido-NAD(+) (ammonia route): step 1/1. In terms of biological role, catalyzes the ATP-dependent amidation of deamido-NAD to form NAD. Uses ammonia as a nitrogen source. The protein is NH(3)-dependent NAD(+) synthetase of Pseudomonas fluorescens (strain Pf0-1).